Consider the following 289-residue polypeptide: Polyamine aminopropyltransferase (289 aa).

One can recognise a PABS domain in the interval 5-238 (TVWHETLHDQ…GIMTFAWATD (234 aa)). Glutamine 33 provides a ligand contact to S-methyl-5'-thioadenosine. Spermidine-binding residues include histidine 64 and aspartate 88. S-methyl-5'-thioadenosine contacts are provided by residues glutamate 108 and 140 to 141 (DG). The active-site Proton acceptor is aspartate 158. Residue 158 to 161 (DCTD) participates in spermidine binding. Proline 165 is a binding site for S-methyl-5'-thioadenosine.

This sequence belongs to the spermidine/spermine synthase family. In terms of assembly, homodimer or homotetramer.

It localises to the cytoplasm. It carries out the reaction S-adenosyl 3-(methylsulfanyl)propylamine + putrescine = S-methyl-5'-thioadenosine + spermidine + H(+). The protein operates within amine and polyamine biosynthesis; spermidine biosynthesis; spermidine from putrescine: step 1/1. Functionally, catalyzes the irreversible transfer of a propylamine group from the amino donor S-adenosylmethioninamine (decarboxy-AdoMet) to putrescine (1,4-diaminobutane) to yield spermidine. This chain is Polyamine aminopropyltransferase, found in Enterobacter sp. (strain 638).